A 274-amino-acid polypeptide reads, in one-letter code: MTLQDEIIKELGVKPVIDPKEEIRVSVDFLKDYLKKYPFIKSFVLGISGGQDSSLAGRLAQIAIEEMRQETADETYKFVAIRLPYGVQADEEDAQRALAFIQPDVSLTVNIKAAVEGQVAALNEAGIEVSDFNKGNIKARQRMITQYAVAGQYQGAVLGTDHAAENITGFFTKFGDGGADLLPLFRLNKRQGKALLAELGADPAIYEKVPTADLEEGKPGLADEIALGVTYNDIDDYTEGKVISEDAKAKIEAWWKKTQHKRHLPISVFDDFWK.

Position 46-53 (46-53) interacts with ATP; the sequence is GISGGQDS. Position 52 (Asp52) interacts with Mg(2+). Position 140 (Arg140) interacts with deamido-NAD(+). ATP is bound at residue Thr160. Glu165 is a binding site for Mg(2+). Deamido-NAD(+)-binding residues include Lys173 and Asp180. The ATP site is built by Lys189 and Thr211. Position 260 to 261 (260 to 261) interacts with deamido-NAD(+); it reads HK.

This sequence belongs to the NAD synthetase family. Homodimer.

The catalysed reaction is deamido-NAD(+) + NH4(+) + ATP = AMP + diphosphate + NAD(+) + H(+). It functions in the pathway cofactor biosynthesis; NAD(+) biosynthesis; NAD(+) from deamido-NAD(+) (ammonia route): step 1/1. Catalyzes the ATP-dependent amidation of deamido-NAD to form NAD. Uses ammonia as a nitrogen source. The protein is NH(3)-dependent NAD(+) synthetase of Lactococcus lactis subsp. lactis (strain IL1403) (Streptococcus lactis).